A 361-amino-acid chain; its full sequence is Probable dual-specificity RNA methyltransferase RlmN (361 aa).

Glu-91 (proton acceptor) is an active-site residue. Residues Gln-97–Arg-329 enclose the Radical SAM core domain. Cys-104 and Cys-340 are oxidised to a cystine. 3 residues coordinate [4Fe-4S] cluster: Cys-111, Cys-115, and Cys-118. S-adenosyl-L-methionine contacts are provided by residues Gly-163–Glu-164, Ser-195, Ser-218–His-220, and Asn-296. Cys-340 (S-methylcysteine intermediate) is an active-site residue.

Belongs to the radical SAM superfamily. RlmN family. Requires [4Fe-4S] cluster as cofactor.

The protein resides in the cytoplasm. The catalysed reaction is adenosine(2503) in 23S rRNA + 2 reduced [2Fe-2S]-[ferredoxin] + 2 S-adenosyl-L-methionine = 2-methyladenosine(2503) in 23S rRNA + 5'-deoxyadenosine + L-methionine + 2 oxidized [2Fe-2S]-[ferredoxin] + S-adenosyl-L-homocysteine. It carries out the reaction adenosine(37) in tRNA + 2 reduced [2Fe-2S]-[ferredoxin] + 2 S-adenosyl-L-methionine = 2-methyladenosine(37) in tRNA + 5'-deoxyadenosine + L-methionine + 2 oxidized [2Fe-2S]-[ferredoxin] + S-adenosyl-L-homocysteine. In terms of biological role, specifically methylates position 2 of adenine 2503 in 23S rRNA and position 2 of adenine 37 in tRNAs. In Streptococcus pneumoniae serotype 2 (strain D39 / NCTC 7466), this protein is Probable dual-specificity RNA methyltransferase RlmN.